The primary structure comprises 947 residues: Bifunctional glutamine synthetase adenylyltransferase/adenylyl-removing enzyme (947 aa).

An adenylyl removase region spans residues 1–440 (MTPLSSPLSQ…VFNELIGDDE (440 aa)). The interval 450–947 (SEPWREVWQD…ASWRKWLVAV (498 aa)) is adenylyl transferase.

This sequence belongs to the GlnE family. The cofactor is Mg(2+).

The catalysed reaction is [glutamine synthetase]-O(4)-(5'-adenylyl)-L-tyrosine + phosphate = [glutamine synthetase]-L-tyrosine + ADP. It carries out the reaction [glutamine synthetase]-L-tyrosine + ATP = [glutamine synthetase]-O(4)-(5'-adenylyl)-L-tyrosine + diphosphate. Involved in the regulation of glutamine synthetase GlnA, a key enzyme in the process to assimilate ammonia. When cellular nitrogen levels are high, the C-terminal adenylyl transferase (AT) inactivates GlnA by covalent transfer of an adenylyl group from ATP to specific tyrosine residue of GlnA, thus reducing its activity. Conversely, when nitrogen levels are low, the N-terminal adenylyl removase (AR) activates GlnA by removing the adenylyl group by phosphorolysis, increasing its activity. The regulatory region of GlnE binds the signal transduction protein PII (GlnB) which indicates the nitrogen status of the cell. This is Bifunctional glutamine synthetase adenylyltransferase/adenylyl-removing enzyme from Salmonella heidelberg (strain SL476).